The following is a 132-amino-acid chain: NADH-quinone oxidoreductase subunit A (132 aa).

The next 3 helical transmembrane spans lie at 7 to 27 (YWVL…MIGV), 62 to 82 (FYLI…LYAW), and 91 to 111 (WTGY…LAYL).

It belongs to the complex I subunit 3 family. As to quaternary structure, NDH-1 is composed of 14 different subunits. Subunits NuoA, H, J, K, L, M, N constitute the membrane sector of the complex.

It is found in the cell inner membrane. It carries out the reaction a quinone + NADH + 5 H(+)(in) = a quinol + NAD(+) + 4 H(+)(out). Its function is as follows. NDH-1 shuttles electrons from NADH, via FMN and iron-sulfur (Fe-S) centers, to quinones in the respiratory chain. The immediate electron acceptor for the enzyme in this species is believed to be ubiquinone. Couples the redox reaction to proton translocation (for every two electrons transferred, four hydrogen ions are translocated across the cytoplasmic membrane), and thus conserves the redox energy in a proton gradient. This Acidiphilium cryptum (strain JF-5) protein is NADH-quinone oxidoreductase subunit A.